Here is a 491-residue protein sequence, read N- to C-terminus: Protein nucleotidyltransferase YdiU (491 aa).

The ATP site is built by glycine 88, glycine 90, arginine 91, lysine 111, aspartate 123, glycine 124, arginine 174, and arginine 181. Aspartate 250 functions as the Proton acceptor in the catalytic mechanism. Mg(2+) is bound by residues asparagine 251 and aspartate 260. Aspartate 260 is an ATP binding site.

The protein belongs to the SELO family. Mg(2+) serves as cofactor. The cofactor is Mn(2+).

The catalysed reaction is L-seryl-[protein] + ATP = 3-O-(5'-adenylyl)-L-seryl-[protein] + diphosphate. It carries out the reaction L-threonyl-[protein] + ATP = 3-O-(5'-adenylyl)-L-threonyl-[protein] + diphosphate. The enzyme catalyses L-tyrosyl-[protein] + ATP = O-(5'-adenylyl)-L-tyrosyl-[protein] + diphosphate. It catalyses the reaction L-histidyl-[protein] + UTP = N(tele)-(5'-uridylyl)-L-histidyl-[protein] + diphosphate. The catalysed reaction is L-seryl-[protein] + UTP = O-(5'-uridylyl)-L-seryl-[protein] + diphosphate. It carries out the reaction L-tyrosyl-[protein] + UTP = O-(5'-uridylyl)-L-tyrosyl-[protein] + diphosphate. Its function is as follows. Nucleotidyltransferase involved in the post-translational modification of proteins. It can catalyze the addition of adenosine monophosphate (AMP) or uridine monophosphate (UMP) to a protein, resulting in modifications known as AMPylation and UMPylation. This chain is Protein nucleotidyltransferase YdiU, found in Rhodopseudomonas palustris (strain BisB18).